Here is an 88-residue protein sequence, read N- to C-terminus: Small ribosomal subunit protein uS17 (88 aa).

The protein belongs to the universal ribosomal protein uS17 family. In terms of assembly, part of the 30S ribosomal subunit.

One of the primary rRNA binding proteins, it binds specifically to the 5'-end of 16S ribosomal RNA. The chain is Small ribosomal subunit protein uS17 from Nitratidesulfovibrio vulgaris (strain DSM 19637 / Miyazaki F) (Desulfovibrio vulgaris).